A 232-amino-acid chain; its full sequence is Chaperone protein CssC (232 aa).

Residues 1–20 (MKSKLIILLMLVPFSSFSTE) form the signal peptide.

The protein belongs to the periplasmic pilus chaperone family.

Its subcellular location is the periplasm. Functionally, involved in the biogenesis of the CS6 fimbria. This Escherichia coli protein is Chaperone protein CssC (cssC).